The following is a 178-amino-acid chain: MTGGAQELLLSRIRDVPDYPQPGVVFKDITPLLADPEAFSVLTEALAEVCVRHGATKVVGLEARGFILGAPVAVRAGLGFIPIRKAGKLPGATLSQAYALEYGTAEIEVHAEDLTPDDRVMVIDDVLATGGTAAAAMELIRRGGADVAGLAVLMELGFLGGRARLEPTLAALEALLAL.

This sequence belongs to the purine/pyrimidine phosphoribosyltransferase family. Homodimer.

It localises to the cytoplasm. The enzyme catalyses AMP + diphosphate = 5-phospho-alpha-D-ribose 1-diphosphate + adenine. Its pathway is purine metabolism; AMP biosynthesis via salvage pathway; AMP from adenine: step 1/1. In terms of biological role, catalyzes a salvage reaction resulting in the formation of AMP, that is energically less costly than de novo synthesis. The protein is Adenine phosphoribosyltransferase of Streptomyces clavuligerus.